The primary structure comprises 1378 residues: Hybrid signal transduction histidine kinase H (1378 aa).

A coiled-coil region spans residues 212–242 (KEKFKKEELINDFKSRLETLENKIDQRVDER). The PAS domain occupies 243-314 (IETRFKYVLE…NNNNNNNNNN (72 aa)). The segment at 294–337 (YQQHNNNNNNNNNNNNNNNNNNNNNSNNKSPIINSPNTTSPTNT) is disordered. The segment covering 298–337 (NNNNNNNNNNNNNNNNNNNNNSNNKSPIINSPNTTSPTNT) has biased composition (low complexity). The Histidine kinase domain maps to 498–805 (TMSHEMRTPL…SFHFLVEVFF (308 aa)). His-501 is modified (phosphohistidine; by autocatalysis). A compositionally biased stretch (low complexity) spans 663 to 696 (NNSNNSNNNHNHNNNNNNNNHLNCSGSFNNNGFN). 3 disordered regions span residues 663–717 (NNSN…DKHC), 905–924 (TNNN…STTT), and 1103–1213 (NNSN…HPNP). Over residues 697–714 (HGHHHHHHHHHHHHHHHD) the composition is skewed to basic residues. 2 stretches are compositionally biased toward low complexity: residues 1103 to 1119 (NNSN…SGSS) and 1136 to 1187 (SPSL…NNNN). The segment covering 1188 to 1206 (LNHYNSDSILSSDLSPQQH) has biased composition (polar residues). One can recognise a Response regulatory domain in the interval 1244–1364 (KIMVAEDSLV…ILAVELKRAW (121 aa)). Asp-1297 bears the 4-aspartylphosphate mark.

In terms of processing, activation probably requires transfer of a phosphate group between a histidine in the kinase core (transmitter) domain and an aspartate of the receiver domain.

It carries out the reaction ATP + protein L-histidine = ADP + protein N-phospho-L-histidine.. Its function is as follows. Acts as a receptor histidine kinase for a signal transduction pathway. This protein undergoes an ATP-dependent autophosphorylation at a conserved histidine residue in the kinase core, and a phosphoryl group is then transferred to a conserved aspartate residue in the receiver domain. In Dictyostelium discoideum (Social amoeba), this protein is Hybrid signal transduction histidine kinase H (dhkH).